A 368-amino-acid chain; its full sequence is Chaperone protein DnaJ (368 aa).

Residues 5–70 form the J domain; the sequence is DYYQVLGVPR…KKRKLYDTHG (66 aa). A CR-type zinc finger spans residues 124-201; sequence GVERQIQIPT…CNGAGRVEDH (78 aa). Residues cysteine 137, cysteine 140, cysteine 153, cysteine 156, cysteine 175, cysteine 178, cysteine 189, and cysteine 192 each coordinate Zn(2+). CXXCXGXG motif repeat units follow at residues 137–144, 153–160, 175–182, and 189–196; these read CTHCHGSG, CGTCRGSG, CPHCGGRG, and CKVCNGAG.

The protein belongs to the DnaJ family. Homodimer. Requires Zn(2+) as cofactor.

The protein localises to the cytoplasm. In terms of biological role, participates actively in the response to hyperosmotic and heat shock by preventing the aggregation of stress-denatured proteins and by disaggregating proteins, also in an autonomous, DnaK-independent fashion. Unfolded proteins bind initially to DnaJ; upon interaction with the DnaJ-bound protein, DnaK hydrolyzes its bound ATP, resulting in the formation of a stable complex. GrpE releases ADP from DnaK; ATP binding to DnaK triggers the release of the substrate protein, thus completing the reaction cycle. Several rounds of ATP-dependent interactions between DnaJ, DnaK and GrpE are required for fully efficient folding. Also involved, together with DnaK and GrpE, in the DNA replication of plasmids through activation of initiation proteins. The protein is Chaperone protein DnaJ of Xylella fastidiosa (strain 9a5c).